A 208-amino-acid chain; its full sequence is Intraflagellar transport protein 43 homolog (208 aa).

Disordered stretches follow at residues 1–105 (MDDN…EDIP) and 187–208 (SELQSEWDEGDREDQSPLPVCV). Residues 78-88 (AAAEEPEDRRL) are compositionally biased toward basic and acidic residues.

Belongs to the IFT43 family. In terms of assembly, component of the IFT complex A (IFT-A) complex.

It is found in the cytoplasm. Its subcellular location is the cytoskeleton. The protein localises to the cell projection. The protein resides in the cilium. As a component of IFT complex A (IFT-A), a complex required for retrograde ciliary transport and entry into cilia of G protein-coupled receptors (GPCRs), it is involved in ciliogenesis. Involved in retrograde ciliary transport along microtubules from the ciliary tip to the base. The protein is Intraflagellar transport protein 43 homolog (ift43) of Danio rerio (Zebrafish).